Here is a 203-residue protein sequence, read N- to C-terminus: Orotate phosphoribosyltransferase (203 aa).

Residues Arg-94, Lys-95, Lys-98, His-100, and 119–127 (DDVATTGGS) each bind 5-phospho-alpha-D-ribose 1-diphosphate. Orotate is bound by residues Thr-123 and Arg-151.

The protein belongs to the purine/pyrimidine phosphoribosyltransferase family. PyrE subfamily. As to quaternary structure, homodimer. It depends on Mg(2+) as a cofactor.

It catalyses the reaction orotidine 5'-phosphate + diphosphate = orotate + 5-phospho-alpha-D-ribose 1-diphosphate. It participates in pyrimidine metabolism; UMP biosynthesis via de novo pathway; UMP from orotate: step 1/2. Catalyzes the transfer of a ribosyl phosphate group from 5-phosphoribose 1-diphosphate to orotate, leading to the formation of orotidine monophosphate (OMP). The chain is Orotate phosphoribosyltransferase from Staphylothermus marinus (strain ATCC 43588 / DSM 3639 / JCM 9404 / F1).